Here is a 451-residue protein sequence, read N- to C-terminus: Magnesium transporter MgtE (451 aa).

Topologically, residues 1-285 (MVQNMTYDEL…TKAYVAAYRR (285 aa)) are cytoplasmic. Mg(2+) is bound by residues D64 and D96. 2 consecutive CBS domains span residues 140–203 (MTNR…VQDL) and 204–260 (MFTR…EADE). Residues E218, D228, D249, D252, E257, E260, and D261 each contribute to the Mg(2+) site. The helical transmembrane segment at 286-306 (LPWLILLLFIGLISGSIISYF) threads the bilayer. Over 307–311 (EDALK) the chain is Extracellular. The chain crosses the membrane as a helical span at residues 312-332 (QVVALAFFMPMVSGMTGNTGT). Residues 333–371 (QSLAVVIRGLSKEEMNKKTIVRLIFREFRTSIFIGAVCS) are Cytoplasmic-facing. The next 2 helical transmembrane spans lie at 372 to 392 (VLIAIVSIIWQGNALLGFVVA) and 393 to 413 (SSLFLTLIIGTMSGTIIPIIL). At 414-427 (HKLKVDPAIASGPL) the chain is on the cytoplasmic side. Mg(2+) is bound by residues D419 and D433. Residues 428 to 448 (ITTLNDILSLLIYFGIATAFI) traverse the membrane as a helical segment. Residues 449–451 (HSL) are Extracellular-facing.

The protein belongs to the SLC41A transporter family. In terms of assembly, homodimer.

It localises to the cell membrane. The enzyme catalyses Mg(2+)(in) = Mg(2+)(out). Binds cyclic di-AMP (c-di-AMP), which may regulate the transporter activity. In terms of biological role, acts as a magnesium transporter. MgtE is the dominant transporter under rich-medium growth conditions, and it may provide the primary route of magnesium import in B.subtilis, while the other putative transport proteins are likely to be utilized for more-specialized growth conditions. The sequence is that of Magnesium transporter MgtE from Bacillus subtilis (strain 168).